The primary structure comprises 570 residues: Multidrug and toxin extrusion protein 1 (570 aa).

Residue M1 is modified to N-acetylmethionine. Topologically, residues 1 to 37 (MEAPEEPAPVRGGPEATLEVRGSRCLRLSAFREELRA) are cytoplasmic. Residues 38–58 (LLVLAGPAFLVQLMVFLISFI) traverse the membrane as a helical segment. The Extracellular segment spans residues 59–72 (SSVFCGHLGKLELD). Residues 73 to 93 (AVTLAIAVINVTGVSVGFGLS) traverse the membrane as a helical segment. Over 94 to 123 (SACDTLISQTYGSQNLKHVGVILQRSALVL) the chain is Cytoplasmic. Residues 124–144 (LLCCFPCWALFLNTQHILLLF) form a helical membrane-spanning segment. At 145–152 (RQDPDVSR) the chain is on the extracellular side. A helical transmembrane segment spans residues 153–173 (LTQTYVTIFIPALPATFLYML). Residues 174–176 (QVK) are Cytoplasmic-facing. The chain crosses the membrane as a helical span at residues 177-197 (YLLNQGIVLPQIVTGVAANLV). Topologically, residues 198–216 (NALANYLFLHQLHLGVIGS) are extracellular. A helical membrane pass occupies residues 217–237 (ALANLISQYTLALLLFLYILG). Topologically, residues 238 to 256 (KKLHQATWGGWSLECLQDW) are cytoplasmic. The chain crosses the membrane as a helical span at residues 257–276 (ASFLRLAIPSMLMLCMEWWA). The Extracellular portion of the chain corresponds to 277–295 (YEVGSFLSGILGMVELGAQ). Residues 296–316 (SIVYELAIIVYMVPAGFSVAA) form a helical membrane-spanning segment. Topologically, residues 317–336 (SVRVGNALGAGDMEQARKSS) are cytoplasmic. Residues 337-357 (TVSLLITVLFAVAFSVLLLSC) form a helical membrane-spanning segment. Topologically, residues 358 to 370 (KDHVGYIFTTDRD) are extracellular. A helical transmembrane segment spans residues 371–391 (IINLVAQVVPIYAVSHLFEAL). The Cytoplasmic portion of the chain corresponds to 392–408 (ACTSGGVLRGSGNQKVG). A helical transmembrane segment spans residues 409–429 (AIVNTIGYYVVGLPIGIALMF). Over 430 to 437 (ATTLGVMG) the chain is Extracellular. A helical membrane pass occupies residues 438 to 458 (LWSGIIICTVFQAVCFLGFII). Over 459-546 (QLNWKKACQQ…LSRKQLVLRR (88 aa)) the chain is Cytoplasmic. Residues 508-534 (DVGKTGEPQSDQQMRQEEPLPEHPQDG) form a disordered region. Over residues 521–533 (MRQEEPLPEHPQD) the composition is skewed to basic and acidic residues. Residues 547–567 (GLLLLGVFLILLVGILVRFYV) form a helical membrane-spanning segment. Residues 568–570 (RIQ) are Extracellular-facing.

This sequence belongs to the multi antimicrobial extrusion (MATE) (TC 2.A.66.1) family. In terms of tissue distribution, widely expressed. The highest expression is found in adrenal gland, and to a lower extent in liver, skeletal muscle and kidney. In testis, primarily localized throughout the adluminal compartment of the seminiferous tubules with expression at the peritubular myoid cells and Leydig cells.

It is found in the cell membrane. The protein localises to the apical cell membrane. The enzyme catalyses thiamine(out) + H(+)(in) = thiamine(in) + H(+)(out). The catalysed reaction is estrone 3-sulfate(in) + H(+)(out) = estrone 3-sulfate(out) + H(+)(in). It carries out the reaction creatinine(in) + H(+)(out) = creatinine(out) + H(+)(in). It catalyses the reaction agmatine(in) + H(+)(out) = agmatine(out) + H(+)(in). Functionally, multidrug efflux pump that functions as a H(+)/organic cation antiporter. Plays a physiological role in the excretion of cationic compounds including endogenous metabolites, drugs, toxins through the kidney and liver, into urine and bile respectively. Mediates the efflux of endogenous compounds such as creatinine, vitamin B1/thiamine, agmatine and estrone-3-sulfate. May also contribute to regulate the transport of cationic compounds in testis across the blood-testis-barrier. This chain is Multidrug and toxin extrusion protein 1, found in Homo sapiens (Human).